Here is a 442-residue protein sequence, read N- to C-terminus: tRNA modification GTPase MnmE (442 aa).

The (6S)-5-formyl-5,6,7,8-tetrahydrofolate site is built by Arg24, Glu82, and Lys120. Residues 217 to 367 (GLHIVITGEP…LVSVIKEKVE (151 aa)) enclose the TrmE-type G domain. GTP contacts are provided by residues 227–232 (NVGKST), 246–252 (SEYVGTT), and 271–274 (DTAG). Residues Ser231 and Thr252 each coordinate Mg(2+). Lys442 is a (6S)-5-formyl-5,6,7,8-tetrahydrofolate binding site.

It belongs to the TRAFAC class TrmE-Era-EngA-EngB-Septin-like GTPase superfamily. TrmE GTPase family. In terms of assembly, homodimer. Heterotetramer of two MnmE and two MnmG subunits. K(+) is required as a cofactor.

It is found in the cytoplasm. Functionally, exhibits a very high intrinsic GTPase hydrolysis rate. Involved in the addition of a carboxymethylaminomethyl (cmnm) group at the wobble position (U34) of certain tRNAs, forming tRNA-cmnm(5)s(2)U34. The sequence is that of tRNA modification GTPase MnmE from Wolbachia sp. subsp. Brugia malayi (strain TRS).